The following is a 330-amino-acid chain: Elongation factor Ts (330 aa).

The segment at T79 to V82 is involved in Mg(2+) ion dislocation from EF-Tu.

This sequence belongs to the EF-Ts family.

It is found in the cytoplasm. In terms of biological role, associates with the EF-Tu.GDP complex and induces the exchange of GDP to GTP. It remains bound to the aminoacyl-tRNA.EF-Tu.GTP complex up to the GTP hydrolysis stage on the ribosome. In Bacteroides thetaiotaomicron (strain ATCC 29148 / DSM 2079 / JCM 5827 / CCUG 10774 / NCTC 10582 / VPI-5482 / E50), this protein is Elongation factor Ts.